The sequence spans 379 residues: F420-dependent formate dehydrogenase subunit beta (379 aa).

2 4Fe-4S ferredoxin-type domains span residues 271–301 (EKWKKYWNRCIKCYGCRDNCPLCFCVECSLE) and 321–351 (IRLSHISQSCINCGQCEDACPMDIPLAYIFH). [4Fe-4S] cluster contacts are provided by Cys280, Cys283, Cys286, Cys290, Cys330, Cys333, Cys336, and Cys340.

Belongs to the FrhB family. In terms of assembly, dimer of an alpha (FdhA) and a beta (FdhB) subunit. It depends on [4Fe-4S] cluster as a cofactor. The cofactor is FAD. Requires Zn(2+) as cofactor.

The enzyme catalyses oxidized coenzyme F420-(gamma-L-Glu)(n) + formate + 2 H(+) = reduced coenzyme F420-(gamma-L-Glu)(n) + CO2. Functionally, catalyzes the oxidation of formate to carbon dioxide, with coenzyme F420 as the electron acceptor. This chain is F420-dependent formate dehydrogenase subunit beta (fdhB), found in Methanocaldococcus jannaschii (strain ATCC 43067 / DSM 2661 / JAL-1 / JCM 10045 / NBRC 100440) (Methanococcus jannaschii).